The sequence spans 154 residues: 17.7 kDa class I heat shock protein (154 aa).

Residues Glu40–Gly154 enclose the sHSP domain.

Belongs to the small heat shock protein (HSP20) family. In terms of assembly, forms oligomeric structures.

It localises to the cytoplasm. This chain is 17.7 kDa class I heat shock protein, found in Solanum peruvianum (Peruvian tomato).